A 388-amino-acid chain; its full sequence is F-box/LRR-repeat protein At3g59190 (388 aa).

Positions 11-64 (KDIISNLPDALLCHVLSFLPTTEAASTSVLAKRWRFLLAFVPNLDLDNMIYDRP) constitute an F-box domain. LRR repeat units lie at residues 151 to 177 (KVSG…HLSA), 180 to 205 (FGDE…VMIK), 228 to 252 (CENI…EFTD), 313 to 345 (TMYL…TVET), and 346 to 371 (DERV…IFEV).

In Arabidopsis thaliana (Mouse-ear cress), this protein is F-box/LRR-repeat protein At3g59190.